The primary structure comprises 200 residues: Snake venom metalloproteinase hemorrhagic factor 2 (200 aa).

A Peptidase M12B domain is found at 4–200; it reads KYIELVVVAD…RKPQCILNKP (197 aa). Glu7 contributes to the Ca(2+) binding site. Asn70 is a glycosylation site (N-linked (GlcNAc...) asparagine). Asp91 contacts Ca(2+). Disulfide bonds link Cys115–Cys195, Cys155–Cys179, and Cys157–Cys162. His140 lines the Zn(2+) pocket. Residue Glu141 is part of the active site. Positions 144 and 150 each coordinate Zn(2+). Cys195 and Asn198 together coordinate Ca(2+).

It belongs to the venom metalloproteinase (M12B) family. P-I subfamily. As to quaternary structure, monomer. Zn(2+) serves as cofactor. In terms of tissue distribution, expressed by the venom gland.

The protein localises to the secreted. Its function is as follows. Snake venom zinc metalloproteinase that induces weak hemorrhage and mild myonecrosis. Shows mild myotoxicity by killing myocytes. Also induces edema in the mouse footpad at doses where hemorrhage is absent. In vitro, degrades laminin, fibronectin, and type IV collagen, suggesting this toxin play a role in local tissue damage by degrading extracellular matrix, and possibly by degrading muscle extracellular matrix. Hemorrhage is not due to cytotoxicity towards endothelial cells in culture, and may only play a minor role in local bleeding characteristic of L.muta envenomations. Also induces the synthesis of several endogenous matrix metalloproteinases, which in turn, may participate in extracellular matrix degradation. This chain is Snake venom metalloproteinase hemorrhagic factor 2, found in Lachesis muta muta (Bushmaster).